The chain runs to 179 residues: MQDQDKYAEQAASIEDPVTAEAASATTPTLEEQLAASQLLVQELQDSFLRAKAEVENFRRRAQEDVTRAHKFAIEGFAEMLLPVKDSLEMALQVETPSVESLKEGVEMTLKQLNAAFEKNRLLEIKPQQGDKLDPMKHQAMSLVPADQEPNTVVNTLQKGYLIADRLLRPALVTVAQEK.

The segment at 1 to 29 (MQDQDKYAEQAASIEDPVTAEAASATTPT) is disordered.

This sequence belongs to the GrpE family. In terms of assembly, homodimer.

The protein localises to the cytoplasm. Functionally, participates actively in the response to hyperosmotic and heat shock by preventing the aggregation of stress-denatured proteins, in association with DnaK and GrpE. It is the nucleotide exchange factor for DnaK and may function as a thermosensor. Unfolded proteins bind initially to DnaJ; upon interaction with the DnaJ-bound protein, DnaK hydrolyzes its bound ATP, resulting in the formation of a stable complex. GrpE releases ADP from DnaK; ATP binding to DnaK triggers the release of the substrate protein, thus completing the reaction cycle. Several rounds of ATP-dependent interactions between DnaJ, DnaK and GrpE are required for fully efficient folding. This is Protein GrpE from Janthinobacterium sp. (strain Marseille) (Minibacterium massiliensis).